Reading from the N-terminus, the 127-residue chain is CDGSH iron-sulfur domain-containing protein 3, mitochondrial (127 aa).

A mitochondrion-targeting transit peptide spans 1–14 (MRGAGAILRPAARG). K55 is modified (N6-acetyllysine; alternate). K55 carries the N6-succinyllysine; alternate modification. 4 residues coordinate [2Fe-2S] cluster: C60, C62, C71, and H75. K86 bears the N6-acetyllysine mark. 4 residues coordinate [2Fe-2S] cluster: C98, C100, C109, and H113.

The protein belongs to the CISD protein family. In terms of assembly, monomer. [2Fe-2S] cluster is required as a cofactor.

It is found in the mitochondrion. Functionally, can transfer its iron-sulfur clusters to the apoferrodoxins FDX1 and FDX2. Contributes to mitochondrial iron homeostasis and in maintaining normal levels of free iron and reactive oxygen species, and thereby contributes to normal mitochondrial function. This is CDGSH iron-sulfur domain-containing protein 3, mitochondrial (CISD3) from Homo sapiens (Human).